Reading from the N-terminus, the 376-residue chain is Transmembrane protein 43 homolog (376 aa).

The Cytoplasmic portion of the chain corresponds to Met-1 to Ser-10. The chain crosses the membrane as a helical span at residues His-11–Trp-31. The Lumenal portion of the chain corresponds to Asn-32–Gln-277. A helical transmembrane segment spans residues Val-278 to Cys-298. Residues Asn-299 to Pro-323 are Cytoplasmic-facing. A run of 2 helical transmembrane segments spans residues Val-324–Ile-344 and Leu-345–Phe-365. The Cytoplasmic segment spans residues Thr-366–Asp-376.

Belongs to the TMEM43 family.

The protein resides in the endoplasmic reticulum membrane. Its subcellular location is the nucleus envelope. Functionally, involved in lipid metabolism and utilization. The chain is Transmembrane protein 43 homolog from Drosophila melanogaster (Fruit fly).